We begin with the raw amino-acid sequence, 736 residues long: Catalase-peroxidase (736 aa).

A compositionally biased stretch (basic and acidic residues) spans 1 to 10 (MDAKTDDKGA). A disordered region spans residues 1–26 (MDAKTDDKGAGKCPFSGGSHGHRNRD). Residues 96-218 (WHSAGTYRIT…LGAVQMGLIY (123 aa)) constitute a cross-link (tryptophyl-tyrosyl-methioninium (Trp-Tyr) (with M-244)). The Proton acceptor role is filled by His97. Positions 218-244 (YVNPEGPNGNPDPVAAAKDIRETFARM) form a cross-link, tryptophyl-tyrosyl-methioninium (Tyr-Met) (with W-96). His259 provides a ligand contact to heme b.

Belongs to the peroxidase family. Peroxidase/catalase subfamily. Homodimer or homotetramer. Heme b serves as cofactor. In terms of processing, formation of the three residue Trp-Tyr-Met cross-link is important for the catalase, but not the peroxidase activity of the enzyme.

It carries out the reaction H2O2 + AH2 = A + 2 H2O. The catalysed reaction is 2 H2O2 = O2 + 2 H2O. Its function is as follows. Bifunctional enzyme with both catalase and broad-spectrum peroxidase activity. The chain is Catalase-peroxidase from Rhodopseudomonas palustris (strain ATCC BAA-98 / CGA009).